The primary structure comprises 203 residues: Ribosome assembly protein 3 (203 aa).

The tract at residues 1–90 is disordered; that stretch reads MSEGHIAAIS…DKKASRKEGS (90 aa). Residues 12–23 are compositionally biased toward basic residues; that stretch reads TNKRKNRRKKRR. Over residues 27–43 the composition is skewed to low complexity; that stretch reads VSDSSSDSSSDSENSSV. The span at 46–58 shows a compositional bias: basic and acidic residues; that stretch reads NDTKLETVEKAAS. Acidic residues predominate over residues 59 to 78; that stretch reads DVEDVTLSDIDMDKEEDEAA. The span at 79 to 89 shows a compositional bias: basic and acidic residues; the sequence is LDDKKASRKEG.

The protein belongs to the RSA3 family. As to quaternary structure, associates with nucleolar pre-ribosomal particles.

It localises to the nucleus. Its subcellular location is the nucleolus. Functionally, required for efficient biogenesis of the 60S ribosomal subunit. The sequence is that of Ribosome assembly protein 3 (RSA3) from Kluyveromyces lactis (strain ATCC 8585 / CBS 2359 / DSM 70799 / NBRC 1267 / NRRL Y-1140 / WM37) (Yeast).